We begin with the raw amino-acid sequence, 268 residues long: Energy-coupling factor transporter transmembrane protein EcfT (268 aa).

Transmembrane regions (helical) follow at residues 26–46 (ILAVLFYMVMVFLANSPLSYG), 47–67 (ILIGFIVLGAALAKLPAGLLL), 73–93 (LWIIILLTMVIHFVTDPGEAL), 116–136 (LVLLLLVSSLMTFTTSPIVLT), 151–171 (VPAHELAMMMTIALRFIPTLL), and 246–266 (ALTGLVMLALFVLLAFLRWGI).

This sequence belongs to the energy-coupling factor EcfT family. As to quaternary structure, forms a stable energy-coupling factor (ECF) transporter complex composed of 2 membrane-embedded substrate-binding proteins (S component), 2 ATP-binding proteins (A component) and 2 transmembrane proteins (T component). May be able to interact with more than 1 S component at a time.

Its subcellular location is the cell membrane. Its function is as follows. Transmembrane (T) component of an energy-coupling factor (ECF) ABC-transporter complex. Unlike classic ABC transporters this ECF transporter provides the energy necessary to transport a number of different substrates. The chain is Energy-coupling factor transporter transmembrane protein EcfT from Acidaminococcus fermentans (strain ATCC 25085 / DSM 20731 / CCUG 9996 / CIP 106432 / VR4).